Here is a 212-residue protein sequence, read N- to C-terminus: Uridine kinase (212 aa).

An ATP-binding site is contributed by 13–20 (GASASGKS).

This sequence belongs to the uridine kinase family.

Its subcellular location is the cytoplasm. The catalysed reaction is uridine + ATP = UMP + ADP + H(+). It catalyses the reaction cytidine + ATP = CMP + ADP + H(+). The protein operates within pyrimidine metabolism; CTP biosynthesis via salvage pathway; CTP from cytidine: step 1/3. It participates in pyrimidine metabolism; UMP biosynthesis via salvage pathway; UMP from uridine: step 1/1. The polypeptide is Uridine kinase (Shewanella frigidimarina (strain NCIMB 400)).